Consider the following 4499-residue polypeptide: Dynein alpha chain, flagellar outer arm (4499 aa).

The interval 1 to 1677 (MSIFWEVPNA…RIRICDASFP (1677 aa)) is stem. Kelch repeat units follow at residues 29–84 (RFVL…ALDD), 86–135 (RLLV…RFGS), 137–183 (VFIF…RFDH), 199–245 (KLLI…VCDG), 253–304 (KVFS…FDVK), and 307–358 (SLLI…IRGL). The Filamin repeat unit spans residues 425-534 (FANTAARNCI…IRGSPFTVKC (110 aa)). 2 Kelch repeats span residues 562-608 (ELVL…VLSD) and 610-661 (ELVV…AVSA). The segment at 653–720 (PKGAAAVSAE…SRPVSAKPAP (68 aa)) is disordered. Residues 655–689 (GAAAVSAEPSAEPAAEPAAEPAAEPDADAPAAEPA) show a composition bias toward low complexity. Positions 690–705 (AEGEEGAVPAEGEEGA) are enriched in acidic residues. Kelch repeat units lie at residues 750–801 (LYVM…ATGN) and 864–913 (KLFL…TLSG). Coiled coils occupy residues 1261 to 1334 (ELHK…MIAN) and 1382 to 1450 (KKEL…RRAF). 2 AAA regions span residues 1678-1921 (YGYE…VLVV) and 1981-2225 (DVIV…KSYS). Residues 1716–1723 (GPAGTGKT) and 2019–2026 (GPTGTGRT) contribute to the ATP site. The Kelch 11 repeat unit spans residues 2269–2317 (MIWAFGGGLVEKDGIPYRRNFDKWFKQTWTTVKIPGKGTVYDYFVNPKT). AAA regions lie at residues 2331–2577 (DYDG…VFQG) and 2679–2928 (EYNE…ERRY). Position 2369–2376 (2369–2376 (GGAGVGKT)) interacts with ATP. Residues 2655–2688 (LADKAYDEVADYTSLYKTLTEALNEYNETNAAMD) adopt a coiled-coil conformation. Residue 2717–2724 (GVGGSGKQ) participates in ATP binding. Residues 3003 to 3023 (VGVEKEKVNAENAAAQVEAEK) adopt a coiled-coil conformation. The stalk stretch occupies residues 3003 to 3262 (VGVEKEKVNA…ERWALTVEQL (260 aa)). The stretch at 3070-3117 (LKKPPPGVDDITAVVIILLENNPKDKSWQAAQKLMNNVDKFLERVKSF) is one Kelch 12 repeat. Coiled coils occupy residues 3170 to 3262 (DVVQ…VEQL) and 3486 to 3515 (NKER…ELED). The interval 3320 to 3550 (LVDDALVAGW…AKRVSTEISE (231 aa)) is AAA 5. The disordered stretch occupies residues 3614-3687 (GRKKGKGLKK…VGDAEDEDDE (74 aa)). The segment covering 3630–3653 (QPMDHQSLMEKARRSSGVGDRRPS) has biased composition (basic and acidic residues). Residues 3843 to 4082 (LQNFCEHMMG…LTTCGDVLYN (240 aa)) form an AAA 6 region.

Belongs to the dynein heavy chain family. As to quaternary structure, consists of at least 3 heavy chains (alpha, beta and gamma), 2 intermediate chains and 8 light chains.

The protein resides in the cell projection. The protein localises to the cilium. Its subcellular location is the flagellum. It is found in the cytoplasm. It localises to the cytoskeleton. The protein resides in the flagellum axoneme. Functionally, force generating protein of eukaryotic cilia and flagella. Produces force towards the minus ends of microtubules. Dynein has ATPase activity; the force-producing power stroke is thought to occur on release of ADP. The protein is Dynein alpha chain, flagellar outer arm (ODA11) of Chlamydomonas reinhardtii (Chlamydomonas smithii).